A 382-amino-acid polypeptide reads, in one-letter code: D-galactonate dehydratase (382 aa).

A Mg(2+)-binding site is contributed by aspartate 183. Histidine 185 serves as the catalytic Proton donor. Mg(2+) contacts are provided by glutamate 209 and glutamate 235. Catalysis depends on histidine 285, which acts as the Proton acceptor.

It belongs to the mandelate racemase/muconate lactonizing enzyme family. GalD subfamily. Requires Mg(2+) as cofactor.

It carries out the reaction D-galactonate = 2-dehydro-3-deoxy-D-galactonate + H2O. Its pathway is carbohydrate acid metabolism; D-galactonate degradation; D-glyceraldehyde 3-phosphate and pyruvate from D-galactonate: step 1/3. In terms of biological role, catalyzes the dehydration of D-galactonate to 2-keto-3-deoxy-D-galactonate. This Variovorax paradoxus (strain S110) protein is D-galactonate dehydratase.